We begin with the raw amino-acid sequence, 335 residues long: Hsp90 co-chaperone Cdc37-like 1 (335 aa).

Residues Met-1 to Trp-11 are compositionally biased toward pro residues. Residues Met-1 to Gly-42 form a disordered region. A self-association region spans residues Glu-2 to Met-170. Residues Asp-27–Asp-40 show a composition bias toward low complexity. 2 positions are modified to phosphoserine: Ser-32 and Ser-88. Residues His-84–Arg-120 are a coiled coil. Residues Lys-147 to Gln-276 form a self-association and interaction with Hsp90 region. Residues Lys-266 to Val-335 form an interaction with Hsp70 region. Positions Ser-277 to Val-335 are required for interaction with STIP1.

This sequence belongs to the CDC37 family. As to quaternary structure, self-associates. Forms complexes with Hsp70 and Hsp90. Interacts with CDC37, FKBP4, PPID and STIP1.

Its subcellular location is the cytoplasm. In terms of biological role, co-chaperone that binds to numerous proteins and promotes their interaction with Hsp70 and Hsp90. The chain is Hsp90 co-chaperone Cdc37-like 1 (Cdc37l1) from Mus musculus (Mouse).